A 198-amino-acid chain; its full sequence is Recombination protein RecR (198 aa).

Residues 57-72 (CSICGNLTDDDPCHIC) form a C4-type zinc finger. Positions 80 to 175 (TTILVVEDAK…KVTRLARGLA (96 aa)) constitute a Toprim domain.

The protein belongs to the RecR family.

May play a role in DNA repair. It seems to be involved in an RecBC-independent recombinational process of DNA repair. It may act with RecF and RecO. This Streptococcus pyogenes serotype M1 protein is Recombination protein RecR.